The chain runs to 393 residues: Formate-dependent phosphoribosylglycinamide formyltransferase (393 aa).

Residues Glu-22–Leu-23 and Glu-82 contribute to the N(1)-(5-phospho-beta-D-ribosyl)glycinamide site. Residues Arg-114, Lys-155, Ser-160–Gln-165, Glu-195–Ile-198, and Glu-203 contribute to the ATP site. The 190-residue stretch at Arg-119–Leu-308 folds into the ATP-grasp domain. Residues Glu-267 and Glu-279 each contribute to the Mg(2+) site. N(1)-(5-phospho-beta-D-ribosyl)glycinamide is bound by residues Asp-286, Lys-356, and Arg-363–Arg-364.

It belongs to the PurK/PurT family. Homodimer.

It catalyses the reaction N(1)-(5-phospho-beta-D-ribosyl)glycinamide + formate + ATP = N(2)-formyl-N(1)-(5-phospho-beta-D-ribosyl)glycinamide + ADP + phosphate + H(+). It functions in the pathway purine metabolism; IMP biosynthesis via de novo pathway; N(2)-formyl-N(1)-(5-phospho-D-ribosyl)glycinamide from N(1)-(5-phospho-D-ribosyl)glycinamide (formate route): step 1/1. Its function is as follows. Involved in the de novo purine biosynthesis. Catalyzes the transfer of formate to 5-phospho-ribosyl-glycinamide (GAR), producing 5-phospho-ribosyl-N-formylglycinamide (FGAR). Formate is provided by PurU via hydrolysis of 10-formyl-tetrahydrofolate. The sequence is that of Formate-dependent phosphoribosylglycinamide formyltransferase from Pseudomonas entomophila (strain L48).